The sequence spans 257 residues: Pantothenate synthetase (257 aa).

29–36 (MGNLHAGH) lines the ATP pocket. Residue histidine 36 is the Proton donor of the active site. Residue glutamine 60 participates in (R)-pantoate binding. Glutamine 60 contributes to the beta-alanine binding site. 145 to 148 (GEKD) is a binding site for ATP. Glutamine 151 contacts (R)-pantoate. ATP-binding positions include valine 174 and 182 to 185 (LSSR).

The protein belongs to the pantothenate synthetase family. In terms of assembly, homodimer.

It is found in the cytoplasm. The enzyme catalyses (R)-pantoate + beta-alanine + ATP = (R)-pantothenate + AMP + diphosphate + H(+). It functions in the pathway cofactor biosynthesis; (R)-pantothenate biosynthesis; (R)-pantothenate from (R)-pantoate and beta-alanine: step 1/1. Functionally, catalyzes the condensation of pantoate with beta-alanine in an ATP-dependent reaction via a pantoyl-adenylate intermediate. This is Pantothenate synthetase from Coxiella burnetii (strain Dugway 5J108-111).